A 378-amino-acid chain; its full sequence is Dual-specificity RNA methyltransferase RlmN (378 aa).

Glu-96 functions as the Proton acceptor in the catalytic mechanism. Residues 102-342 (QGGRGTLCVS…VRTTRGDDID (241 aa)) enclose the Radical SAM core domain. The cysteines at positions 109 and 345 are disulfide-linked. Residues Cys-116, Cys-120, and Cys-123 each contribute to the [4Fe-4S] cluster site. S-adenosyl-L-methionine contacts are provided by residues 170-171 (GE), Ser-202, 224-226 (SLH), and Asn-302. Cys-345 acts as the S-methylcysteine intermediate in catalysis.

The protein belongs to the radical SAM superfamily. RlmN family. [4Fe-4S] cluster serves as cofactor.

The protein localises to the cytoplasm. The catalysed reaction is adenosine(2503) in 23S rRNA + 2 reduced [2Fe-2S]-[ferredoxin] + 2 S-adenosyl-L-methionine = 2-methyladenosine(2503) in 23S rRNA + 5'-deoxyadenosine + L-methionine + 2 oxidized [2Fe-2S]-[ferredoxin] + S-adenosyl-L-homocysteine. It catalyses the reaction adenosine(37) in tRNA + 2 reduced [2Fe-2S]-[ferredoxin] + 2 S-adenosyl-L-methionine = 2-methyladenosine(37) in tRNA + 5'-deoxyadenosine + L-methionine + 2 oxidized [2Fe-2S]-[ferredoxin] + S-adenosyl-L-homocysteine. In terms of biological role, specifically methylates position 2 of adenine 2503 in 23S rRNA and position 2 of adenine 37 in tRNAs. m2A2503 modification seems to play a crucial role in the proofreading step occurring at the peptidyl transferase center and thus would serve to optimize ribosomal fidelity. The chain is Dual-specificity RNA methyltransferase RlmN from Pseudomonas paraeruginosa (strain DSM 24068 / PA7) (Pseudomonas aeruginosa (strain PA7)).